The chain runs to 283 residues: Pantothenate synthetase (283 aa).

30–37 (MGNLHDGH) contacts ATP. Residue His37 is the Proton donor of the active site. Gln61 provides a ligand contact to (R)-pantoate. A beta-alanine-binding site is contributed by Gln61. ATP is bound at residue 149–152 (GEKD). Residue Gln155 participates in (R)-pantoate binding. 186–189 (LSSR) lines the ATP pocket.

It belongs to the pantothenate synthetase family. Homodimer.

The protein resides in the cytoplasm. The enzyme catalyses (R)-pantoate + beta-alanine + ATP = (R)-pantothenate + AMP + diphosphate + H(+). Its pathway is cofactor biosynthesis; (R)-pantothenate biosynthesis; (R)-pantothenate from (R)-pantoate and beta-alanine: step 1/1. Catalyzes the condensation of pantoate with beta-alanine in an ATP-dependent reaction via a pantoyl-adenylate intermediate. In Escherichia coli O6:K15:H31 (strain 536 / UPEC), this protein is Pantothenate synthetase.